The primary structure comprises 483 residues: ATP synthase subunit beta (483 aa).

169 to 176 (GGAGVGKT) serves as a coordination point for ATP.

It belongs to the ATPase alpha/beta chains family. As to quaternary structure, F-type ATPases have 2 components, CF(1) - the catalytic core - and CF(0) - the membrane proton channel. CF(1) has five subunits: alpha(3), beta(3), gamma(1), delta(1), epsilon(1). CF(0) has three main subunits: a(1), b(2) and c(9-12). The alpha and beta chains form an alternating ring which encloses part of the gamma chain. CF(1) is attached to CF(0) by a central stalk formed by the gamma and epsilon chains, while a peripheral stalk is formed by the delta and b chains.

It is found in the cell membrane. It catalyses the reaction ATP + H2O + 4 H(+)(in) = ADP + phosphate + 5 H(+)(out). Produces ATP from ADP in the presence of a proton gradient across the membrane. The catalytic sites are hosted primarily by the beta subunits. The polypeptide is ATP synthase subunit beta (Corynebacterium glutamicum (strain ATCC 13032 / DSM 20300 / JCM 1318 / BCRC 11384 / CCUG 27702 / LMG 3730 / NBRC 12168 / NCIMB 10025 / NRRL B-2784 / 534)).